We begin with the raw amino-acid sequence, 487 residues long: Pentatricopeptide repeat-containing protein At5g61370, mitochondrial (487 aa).

The transit peptide at 1-90 (MMSTTVRLNR…TSPRRLLRFF (90 aa)) directs the protein to the mitochondrion. 8 PPR repeats span residues 137–171 (DKQT…SCPQ), 172–202 (DGFT…HKDV), 207–241 (ELSV…GITP), 242–283 (DLFC…KIQP), 284–318 (TSMS…GCDP), 319–353 (DTGS…GFRP), 354–388 (ERKF…SVGG), and 389–423 (YGQV…DVTL). The segment at 466–487 (TKPKLKLKPKRRSKTKKKNLQH) is disordered.

Belongs to the PPR family. P subfamily.

It is found in the mitochondrion. The polypeptide is Pentatricopeptide repeat-containing protein At5g61370, mitochondrial (Arabidopsis thaliana (Mouse-ear cress)).